The primary structure comprises 126 residues: Fatty acid-binding protein 10-A, liver basic (126 aa).

Cholate contacts are provided by Lys-57, Lys-77, His-99, and Gln-101.

The protein belongs to the calycin superfamily. Fatty-acid binding protein (FABP) family. Expressed in the developing embryonic liver from 48 hpf. Also expressed in the liver of 5-day-old larvae. In adults, primarily expressed in the liver, with weak expression in the testis and intestine.

The protein localises to the cytoplasm. Functionally, binds hydrophobic ligands, such as cholate, in the cytoplasm. May be involved in intracellular lipid transport. Binds one cholate per subunit. This Danio rerio (Zebrafish) protein is Fatty acid-binding protein 10-A, liver basic (fabp10a).